The following is a 90-amino-acid chain: Small ribosomal subunit protein bS18 (90 aa).

The protein belongs to the bacterial ribosomal protein bS18 family. In terms of assembly, part of the 30S ribosomal subunit. Forms a tight heterodimer with protein bS6.

In terms of biological role, binds as a heterodimer with protein bS6 to the central domain of the 16S rRNA, where it helps stabilize the platform of the 30S subunit. The protein is Small ribosomal subunit protein bS18 of Polynucleobacter asymbioticus (strain DSM 18221 / CIP 109841 / QLW-P1DMWA-1) (Polynucleobacter necessarius subsp. asymbioticus).